Consider the following 806-residue polypeptide: Leucine--tRNA ligase (806 aa).

Positions S54–H64 match the 'HIGH' region motif. The 'KMSKS' region signature appears at K571–S575. ATP is bound at residue K574.

Belongs to the class-I aminoacyl-tRNA synthetase family.

It localises to the cytoplasm. The enzyme catalyses tRNA(Leu) + L-leucine + ATP = L-leucyl-tRNA(Leu) + AMP + diphosphate. The chain is Leucine--tRNA ligase from Tropheryma whipplei (strain Twist) (Whipple's bacillus).